The sequence spans 450 residues: MPSLEVKLRKAVLAATDGKLRSDNWQYIIGVCDLVKEDPEDASQIVMEMIEKRLGQNDANVMLRSLALVVALAENCGSRLKQQVSSKHFTGILAQLLESGDVHMTVKKEIAKVVKQLSDSFKSDPSLKTMGDLNTRIRRKWPGLLEEPEKPSKQKVSHQEATDEDQELQRALKMSLEEFEKSKQQSNGSAVQSNSLQDHNQGQQQPQQQTTSGIRRVRALYDLNANEQDELSFRKGDVIVVLEQVYRDWWRGSLHGKIGIFPLNYVTPITEPSPVESQREQQIEEGVLSQAQNVQVLSAKMQMASGKGLSELNQDPEFNDLYSTVTPIRPHVTKLIGKYAKEKDDVIALRQVLLNAESTYNELLDRAAKSYSIPNTQAPPYAPAVTSQPGYVSNNTYQTTNGQYTQHNITPQQQYQVPSQNYQSQPPSMQSNHYIGYQHPGINDQPPPNY.

In terms of domain architecture, VHS spans 15–145 (ATDGKLRSDN…RIRRKWPGLL (131 aa)). 3 disordered regions span residues 141–167 (WPGL…EDQE), 179–212 (FEKS…QTTS), and 374–450 (PNTQ…PPNY). Over residues 147-167 (EPEKPSKQKVSHQEATDEDQE) the composition is skewed to basic and acidic residues. The 20-residue stretch at 163-182 (DEDQELQRALKMSLEEFEKS) folds into the UIM domain. The segment covering 184 to 196 (QQSNGSAVQSNSL) has biased composition (polar residues). Positions 197 to 209 (QDHNQGQQQPQQQ) are enriched in low complexity. Residues 212 to 271 (SGIRRVRALYDLNANEQDELSFRKGDVIVVLEQVYRDWWRGSLHGKIGIFPLNYVTPITE) enclose the SH3 domain. Low complexity predominate over residues 394–432 (NNTYQTTNGQYTQHNITPQQQYQVPSQNYQSQPPSMQSN).

This sequence belongs to the STAM family. In terms of assembly, component of the ESCRT-0 complex composed of HSE1 and VPS27.

The protein localises to the endosome membrane. Functionally, component of the ESCRT-0 complex which is the sorting receptor for ubiquitinated cargo proteins at the multivesicular body (MVB). The polypeptide is Class E vacuolar protein-sorting machinery protein HSE1 (HSE1) (Candida glabrata (strain ATCC 2001 / BCRC 20586 / JCM 3761 / NBRC 0622 / NRRL Y-65 / CBS 138) (Yeast)).